The chain runs to 197 residues: Imidazoleglycerol-phosphate dehydratase (197 aa).

This sequence belongs to the imidazoleglycerol-phosphate dehydratase family.

The protein localises to the cytoplasm. The enzyme catalyses D-erythro-1-(imidazol-4-yl)glycerol 3-phosphate = 3-(imidazol-4-yl)-2-oxopropyl phosphate + H2O. It participates in amino-acid biosynthesis; L-histidine biosynthesis; L-histidine from 5-phospho-alpha-D-ribose 1-diphosphate: step 6/9. The polypeptide is Imidazoleglycerol-phosphate dehydratase (Rhodopseudomonas palustris (strain BisB5)).